The sequence spans 411 residues: LL-diaminopimelate aminotransferase (411 aa).

Substrate contacts are provided by Tyr-16 and Gly-43. Pyridoxal 5'-phosphate contacts are provided by residues Tyr-73, 109–110 (AK), Tyr-133, Asn-188, Tyr-219, and 247–249 (SFS). Residues Lys-110, Tyr-133, and Asn-188 each contribute to the substrate site. Lys-250 is modified (N6-(pyridoxal phosphate)lysine). The pyridoxal 5'-phosphate site is built by Arg-258 and Asn-293. Substrate contacts are provided by Asn-293 and Arg-389.

Belongs to the class-I pyridoxal-phosphate-dependent aminotransferase family. LL-diaminopimelate aminotransferase subfamily. As to quaternary structure, homodimer. Pyridoxal 5'-phosphate is required as a cofactor.

It carries out the reaction (2S,6S)-2,6-diaminopimelate + 2-oxoglutarate = (S)-2,3,4,5-tetrahydrodipicolinate + L-glutamate + H2O + H(+). The protein operates within amino-acid biosynthesis; L-lysine biosynthesis via DAP pathway; LL-2,6-diaminopimelate from (S)-tetrahydrodipicolinate (aminotransferase route): step 1/1. Functionally, involved in the synthesis of meso-diaminopimelate (m-DAP or DL-DAP), required for both lysine and peptidoglycan biosynthesis. Catalyzes the direct conversion of tetrahydrodipicolinate to LL-diaminopimelate. This chain is LL-diaminopimelate aminotransferase, found in Methanobrevibacter smithii (strain ATCC 35061 / DSM 861 / OCM 144 / PS).